The chain runs to 100 residues: Large ribosomal subunit protein uL23 (100 aa).

The protein belongs to the universal ribosomal protein uL23 family. As to quaternary structure, part of the 50S ribosomal subunit. Contacts protein L29, and trigger factor when it is bound to the ribosome.

Functionally, one of the early assembly proteins it binds 23S rRNA. One of the proteins that surrounds the polypeptide exit tunnel on the outside of the ribosome. Forms the main docking site for trigger factor binding to the ribosome. The sequence is that of Large ribosomal subunit protein uL23 from Pseudoalteromonas atlantica (strain T6c / ATCC BAA-1087).